The sequence spans 333 residues: Phosphate acyltransferase (333 aa).

This sequence belongs to the PlsX family. As to quaternary structure, homodimer. Probably interacts with PlsY.

It localises to the cytoplasm. It carries out the reaction a fatty acyl-[ACP] + phosphate = an acyl phosphate + holo-[ACP]. Its pathway is lipid metabolism; phospholipid metabolism. Its function is as follows. Catalyzes the reversible formation of acyl-phosphate (acyl-PO(4)) from acyl-[acyl-carrier-protein] (acyl-ACP). This enzyme utilizes acyl-ACP as fatty acyl donor, but not acyl-CoA. This chain is Phosphate acyltransferase, found in Lactobacillus gasseri (strain ATCC 33323 / DSM 20243 / BCRC 14619 / CIP 102991 / JCM 1131 / KCTC 3163 / NCIMB 11718 / NCTC 13722 / AM63).